A 385-amino-acid chain; its full sequence is DNA replication and repair protein RecF (385 aa).

30–37 (GSNGFGKT) contributes to the ATP binding site.

The protein belongs to the RecF family.

It localises to the cytoplasm. Functionally, the RecF protein is involved in DNA metabolism; it is required for DNA replication and normal SOS inducibility. RecF binds preferentially to single-stranded, linear DNA. It also seems to bind ATP. This Mycobacterium avium (strain 104) protein is DNA replication and repair protein RecF.